The following is a 285-amino-acid chain: Acetyl-coenzyme A carboxylase carboxyl transferase subunit beta 2 (285 aa).

Residues 1–20 (MAIRSLFSGNRKKKEDGQEK) form a disordered region. The CoA carboxyltransferase N-terminal domain occupies 26-285 (LMTKCPECRH…MHTKGGVQHV (260 aa)). Zn(2+)-binding residues include Cys-30, Cys-33, Cys-49, and Cys-52. Residues 30 to 52 (CPECRHIQLTKELEKNHKVCTKC) form a C4-type zinc finger.

It belongs to the AccD/PCCB family. Acetyl-CoA carboxylase is a heterohexamer composed of biotin carboxyl carrier protein (AccB), biotin carboxylase (AccC) and two subunits each of ACCase subunit alpha (AccA) and ACCase subunit beta (AccD). Zn(2+) serves as cofactor.

It is found in the cytoplasm. The enzyme catalyses N(6)-carboxybiotinyl-L-lysyl-[protein] + acetyl-CoA = N(6)-biotinyl-L-lysyl-[protein] + malonyl-CoA. Its pathway is lipid metabolism; malonyl-CoA biosynthesis; malonyl-CoA from acetyl-CoA: step 1/1. Component of the acetyl coenzyme A carboxylase (ACC) complex. Biotin carboxylase (BC) catalyzes the carboxylation of biotin on its carrier protein (BCCP) and then the CO(2) group is transferred by the transcarboxylase to acetyl-CoA to form malonyl-CoA. This chain is Acetyl-coenzyme A carboxylase carboxyl transferase subunit beta 2, found in Lysinibacillus sphaericus (strain C3-41).